The chain runs to 243 residues: UPF0502 protein Rmet_3697 (243 aa).

Positions 1–11 (MTDTPDTPDTP) are enriched in low complexity. The disordered stretch occupies residues 1–23 (MTDTPDTPDTPMATGASSRPPLR).

It belongs to the UPF0502 family.

This is UPF0502 protein Rmet_3697 from Cupriavidus metallidurans (strain ATCC 43123 / DSM 2839 / NBRC 102507 / CH34) (Ralstonia metallidurans).